Here is a 93-residue protein sequence, read N- to C-terminus: Putative pterin-4-alpha-carbinolamine dehydratase (93 aa).

The protein belongs to the pterin-4-alpha-carbinolamine dehydratase family.

It carries out the reaction (4aS,6R)-4a-hydroxy-L-erythro-5,6,7,8-tetrahydrobiopterin = (6R)-L-erythro-6,7-dihydrobiopterin + H2O. The sequence is that of Putative pterin-4-alpha-carbinolamine dehydratase from Synechococcus sp. (strain WH7803).